The primary structure comprises 190 residues: MRNVWLIVPFALLAAFSGETWAQADRDLYIDSTESSGNYPVDDDDYSSGSGSGIPAHDDDEDNVVLTTVQTLISSPSSEMPYVDTTTLKTQTKMAPETKEPGEVESTNTVLVHENKNIIQTATHTENLFHRTEVLAAVIAGGGIGFLFAVFLILLLVYRMRKKDEGSYDLGERKPSSAVYQKAPTKEFYA.

The first 22 residues, 1 to 22, serve as a signal peptide directing secretion; sequence MRNVWLIVPFALLAAFSGETWA. Residues 23-136 lie on the Extracellular side of the membrane; that stretch reads QADRDLYIDS…NLFHRTEVLA (114 aa). The tract at residues 34–60 is disordered; the sequence is ESSGNYPVDDDDYSSGSGSGIPAHDDD. Ser36, Ser48, Ser50, and Ser52 each carry an O-linked (Xyl...) (glycosaminoglycan) serine glycan. The chain crosses the membrane as a helical span at residues 137–157; the sequence is AVIAGGGIGFLFAVFLILLLV. Topologically, residues 158–190 are cytoplasmic; sequence YRMRKKDEGSYDLGERKPSSAVYQKAPTKEFYA. Positions 167–190 are disordered; sequence SYDLGERKPSSAVYQKAPTKEFYA.

The protein belongs to the syndecan proteoglycan family. In terms of processing, O-glycosylated; contains both heparan sulfate and chondroitin sulfate.

It is found in the membrane. Its function is as follows. Cell surface proteoglycan. The protein is Syndecan-2-B (sdc2-b) of Xenopus laevis (African clawed frog).